A 137-amino-acid polypeptide reads, in one-letter code: Peptide methionine sulfoxide reductase MsrB (137 aa).

A disordered region spans residues Met-1–Thr-33. A MsrB domain is found at Asp-13 to Ala-135. Zn(2+)-binding residues include Cys-52, Cys-55, Cys-101, and Cys-104. Cys-124 serves as the catalytic Nucleophile.

The protein belongs to the MsrB Met sulfoxide reductase family. Zn(2+) serves as cofactor.

It carries out the reaction L-methionyl-[protein] + [thioredoxin]-disulfide + H2O = L-methionyl-(R)-S-oxide-[protein] + [thioredoxin]-dithiol. The sequence is that of Peptide methionine sulfoxide reductase MsrB from Thioalkalivibrio sulfidiphilus (strain HL-EbGR7).